A 391-amino-acid chain; its full sequence is Oocyte zinc finger protein XlCOF7.2 (391 aa).

4 C2H2-type zinc fingers span residues 284 to 306 (FPCS…YRTH), 312 to 334 (YPCS…RRIH), 340 to 362 (SSCS…HRTH), and 368 to 391 (YSCS…RRTH).

This sequence belongs to the krueppel C2H2-type zinc-finger protein family.

It is found in the nucleus. In terms of biological role, may be involved in transcriptional regulation. This Xenopus laevis (African clawed frog) protein is Oocyte zinc finger protein XlCOF7.2.